An 886-amino-acid chain; its full sequence is UPF0592 membrane protein C7D4.03c (886 aa).

The segment at 87 to 112 (ILNEPYNESPSSSSSDSSSRSTSPFS) is disordered. The segment covering 95 to 112 (SPSSSSSDSSSRSTSPFS) has biased composition (low complexity). The next 3 membrane-spanning stretches (helical) occupy residues 277–297 (FCAS…DHFL), 374–394 (GGFF…QFSF), and 400–420 (VIYF…LTIS).

It belongs to the UPF0592 family.

It is found in the membrane. The sequence is that of UPF0592 membrane protein C7D4.03c from Schizosaccharomyces pombe (strain 972 / ATCC 24843) (Fission yeast).